A 205-amino-acid chain; its full sequence is Adenylyl-sulfate kinase (205 aa).

31-38 (GLSGAGKS) provides a ligand contact to ATP. Residue S105 is the Phosphoserine intermediate of the active site.

The protein belongs to the APS kinase family.

It catalyses the reaction adenosine 5'-phosphosulfate + ATP = 3'-phosphoadenylyl sulfate + ADP + H(+). The protein operates within sulfur metabolism; hydrogen sulfide biosynthesis; sulfite from sulfate: step 2/3. Functionally, catalyzes the synthesis of activated sulfate. This Shewanella sp. (strain MR-4) protein is Adenylyl-sulfate kinase.